Reading from the N-terminus, the 997-residue chain is Bifunctional purine synthesis protein purC/E (997 aa).

An SAICAR synthetase region spans residues 1 to 305 (MTTAINNNIV…NNNNNNNNNS (305 aa)). 3 stretches are compositionally biased toward low complexity: residues 294–323 (LNNNNNNNNNNSNNNNNNTSSTSRSNSLPN), 342–355 (QQQSGVGNNNNVNS), and 524–536 (TSTSTTTTTTTTS). Disordered stretches follow at residues 294-355 (LNNN…NVNS), 518-538 (IPVDNPTSTSTTTTTTTTSNA), 550-569 (INSNTSSHNNNQQQQQQQQT), and 575-604 (PTIINTPTPVRSSVSRSQSPLPSGNGSSII). The tract at residues 305-997 (SNNNNNNTSS…GRKMGHVTQQ (693 aa)) is AIR carboxylase. The span at 575-597 (PTIINTPTPVRSSVSRSQSPLPS) shows a compositional bias: low complexity. ATP-binding positions include Arg728, Lys768, Gln779, 807-810 (EQYI), and Glu815. The ATP-grasp domain maps to 732 to 927 (KTFIQSLDIP…QFEQLIRCVC (196 aa)). Residues Glu880 and Glu898 each coordinate Mg(2+). ATP is bound at residue 897-898 (NE).

It in the N-terminal section; belongs to the SAICAR synthetase family. The protein in the C-terminal section; belongs to the AIR carboxylase family. Class I subfamily. Mg(2+) serves as cofactor. Mn(2+) is required as a cofactor.

It catalyses the reaction 5-amino-1-(5-phospho-D-ribosyl)imidazole-4-carboxylate + L-aspartate + ATP = (2S)-2-[5-amino-1-(5-phospho-beta-D-ribosyl)imidazole-4-carboxamido]succinate + ADP + phosphate + 2 H(+). It carries out the reaction 5-amino-1-(5-phospho-D-ribosyl)imidazole-4-carboxylate + H(+) = 5-amino-1-(5-phospho-beta-D-ribosyl)imidazole + CO2. It participates in purine metabolism; IMP biosynthesis via de novo pathway; 5-amino-1-(5-phospho-D-ribosyl)imidazole-4-carboxylate from 5-amino-1-(5-phospho-D-ribosyl)imidazole (carboxylase route): step 1/1. Its pathway is purine metabolism; IMP biosynthesis via de novo pathway; 5-amino-1-(5-phospho-D-ribosyl)imidazole-4-carboxamide from 5-amino-1-(5-phospho-D-ribosyl)imidazole-4-carboxylate: step 1/2. Bifunctional enzyme involved in de novo IMP synthesis, an essential step for de nove purine synthesis. In Dictyostelium discoideum (Social amoeba), this protein is Bifunctional purine synthesis protein purC/E (purC/E).